The following is a 510-amino-acid chain: MRGAFYVAIALLGSHTAAECNQDEPQGAPNNDFLTFGGTIEKMLPRRVLRERRDSKDKLTVHAGAEERVMDPPPEAVEQAIMKTAGVMRTDSDDVIARAAGAIRAHEEIEALFRRIDPTLYNVNGQALHALPKPTNYMVSVASDIPTVPAKRAKVKASADVINNAAWRVSKHDLRLAPPEPSPSSIASSGIRFDNQPIAEKAFKLDLNKHSDEVEIINSNSKRKRIDLTPSHVGEQAPHPLPELQKYKVSVAVSIPMVLATKLEGDGPTLIMRNAANIITTHDFRPAPFGSSTRTVASSNSQIHSQPIAQEASKFALNVDPNEVKSLFHENLPLVGHALHTRVGNDELVPLATVNSIKAGNTQGPYVHKPRMATDEEIHAAFLEAFNLPFHQYLYETSIMIKIVKRQYKTSPGNHRIVESFSSLVNNQELSKLKESLGPDLQNLLAGMLELQDDLKSLREAYYVKLLIMYELFYDFCYVRLDLFDALVPKVDRTVWILKLKNYETLPSHD.

The N-terminal stretch at 1–18 (MRGAFYVAIALLGSHTAA) is a signal peptide. Positions 47–68 (RVLRERRDSKDKLTVHAGAEER) match the RxLR-dEER motif.

This sequence belongs to the RxLR effector family.

Its subcellular location is the secreted. The protein resides in the host nucleus. Secreted effector that acts as an elicitor that induces cell death in host plant cells. This is Secreted RxLR effector protein 24 from Plasmopara viticola (Downy mildew of grapevine).